The following is a 727-amino-acid chain: NADH-ubiquinone oxidoreductase 75 kDa subunit, mitochondrial (727 aa).

The transit peptide at 1–23 (MLRIPVRKALVGLSKSPKGCVRT) directs the protein to the mitochondrion. Residues 30–108 (NLIEVFVDGQ…GWNILTNSEK (79 aa)) form the 2Fe-2S ferredoxin-type domain. [2Fe-2S] cluster contacts are provided by Cys-64, Cys-75, and Cys-78. Lys-84 bears the N6-acetyllysine mark. Cys-92 lines the [2Fe-2S] cluster pocket. The 4Fe-4S His(Cys)3-ligated-type domain maps to 108 to 147 (KSKKAREGVMELLLANHPLDCPICDQGGECDLQDQSMMFG). Residues His-124, Cys-128, Cys-131, Cys-137, Cys-176, Cys-179, Cys-182, and Cys-226 each contribute to the [4Fe-4S] cluster site. The 4Fe-4S Mo/W bis-MGD-type domain occupies 245–301 (TRKTESIDVMDAVGSNIVVSTRTGEVMRILPRMHEDINEEWISDKTRFAYDGLKRQR). N6-acetyllysine is present on residues Lys-467, Lys-499, and Lys-709.

This sequence belongs to the complex I 75 kDa subunit family. As to quaternary structure, core subunit of respiratory chain NADH dehydrogenase (Complex I) which is composed of 45 different subunits. This is the largest subunit of complex I and it is a component of the iron-sulfur (IP) fragment of the enzyme. Complex I associates with ubiquinol-cytochrome reductase complex (Complex III) to form supercomplexes. Interacts with MDM2 and AKAP1. Requires [2Fe-2S] cluster as cofactor. [4Fe-4S] cluster is required as a cofactor.

The protein localises to the mitochondrion inner membrane. It catalyses the reaction a ubiquinone + NADH + 5 H(+)(in) = a ubiquinol + NAD(+) + 4 H(+)(out). Functionally, core subunit of the mitochondrial membrane respiratory chain NADH dehydrogenase (Complex I) which catalyzes electron transfer from NADH through the respiratory chain, using ubiquinone as an electron acceptor. Essential for catalysing the entry and efficient transfer of electrons within complex I. Plays a key role in the assembly and stability of complex I and participates in the association of complex I with ubiquinol-cytochrome reductase complex (Complex III) to form supercomplexes. In Pongo abelii (Sumatran orangutan), this protein is NADH-ubiquinone oxidoreductase 75 kDa subunit, mitochondrial (NDUFS1).